Reading from the N-terminus, the 116-residue chain is Holo-[acyl-carrier-protein] synthase (116 aa).

Mg(2+)-binding residues include aspartate 8 and glutamate 59.

Belongs to the P-Pant transferase superfamily. AcpS family. Mg(2+) is required as a cofactor.

It localises to the cytoplasm. The enzyme catalyses apo-[ACP] + CoA = holo-[ACP] + adenosine 3',5'-bisphosphate + H(+). Its function is as follows. Transfers the 4'-phosphopantetheine moiety from coenzyme A to a Ser of acyl-carrier-protein. The protein is Holo-[acyl-carrier-protein] synthase of Staphylococcus saprophyticus subsp. saprophyticus (strain ATCC 15305 / DSM 20229 / NCIMB 8711 / NCTC 7292 / S-41).